Consider the following 137-residue polypeptide: Small ribosomal subunit protein bS6 (137 aa).

A disordered region spans residues valine 96–glutamate 137. The segment covering lysine 104–glutamate 137 has biased composition (basic and acidic residues).

It belongs to the bacterial ribosomal protein bS6 family.

Functionally, binds together with bS18 to 16S ribosomal RNA. The protein is Small ribosomal subunit protein bS6 of Vibrio atlanticus (strain LGP32) (Vibrio splendidus (strain Mel32)).